Consider the following 211-residue polypeptide: Uracil phosphoribosyltransferase (211 aa).

5-phospho-alpha-D-ribose 1-diphosphate is bound by residues Arg-78, Arg-103, and 130-138 (DPMLATGGT). Uracil is bound by residues Ile-196 and 201–203 (GDA). Asp-202 contacts 5-phospho-alpha-D-ribose 1-diphosphate.

Belongs to the UPRTase family. The cofactor is Mg(2+).

The catalysed reaction is UMP + diphosphate = 5-phospho-alpha-D-ribose 1-diphosphate + uracil. It participates in pyrimidine metabolism; UMP biosynthesis via salvage pathway; UMP from uracil: step 1/1. With respect to regulation, allosterically activated by GTP. Functionally, catalyzes the conversion of uracil and 5-phospho-alpha-D-ribose 1-diphosphate (PRPP) to UMP and diphosphate. The sequence is that of Uracil phosphoribosyltransferase from Beutenbergia cavernae (strain ATCC BAA-8 / DSM 12333 / CCUG 43141 / JCM 11478 / NBRC 16432 / NCIMB 13614 / HKI 0122).